The following is a 244-amino-acid chain: UPF0280 protein MJ1526 (244 aa).

Belongs to the UPF0280 family.

This Methanocaldococcus jannaschii (strain ATCC 43067 / DSM 2661 / JAL-1 / JCM 10045 / NBRC 100440) (Methanococcus jannaschii) protein is UPF0280 protein MJ1526.